The chain runs to 223 residues: Thymine-DNA glycosylase (223 aa).

Positions 201, 208, 211, and 217 each coordinate [4Fe-4S] cluster.

The protein belongs to the Nth/MutY family. Requires [4Fe-4S] cluster as cofactor.

It carries out the reaction Hydrolyzes mismatched double-stranded DNA and polynucleotides, releasing free thymine.. Thymine cleavage is completely inhibited by Ni(2+), Co(2+), Zn(2+), Cu(2+) and Mn(2+). Activity is not affected by Mg(2+) and Ca(2+). Functionally, DNA glycosylase that excises thymine from T/G mismatches. Also has a weak DNA glycosylase activity on uracil paired with various bases. The protein is Thymine-DNA glycosylase of Aeropyrum pernix (strain ATCC 700893 / DSM 11879 / JCM 9820 / NBRC 100138 / K1).